Reading from the N-terminus, the 413-residue chain is CinA-like protein (413 aa).

It belongs to the CinA family.

The sequence is that of CinA-like protein from Geobacter metallireducens (strain ATCC 53774 / DSM 7210 / GS-15).